The following is a 197-amino-acid chain: Probable nicotinate-nucleotide adenylyltransferase (197 aa).

The protein belongs to the NadD family.

The catalysed reaction is nicotinate beta-D-ribonucleotide + ATP + H(+) = deamido-NAD(+) + diphosphate. It functions in the pathway cofactor biosynthesis; NAD(+) biosynthesis; deamido-NAD(+) from nicotinate D-ribonucleotide: step 1/1. Functionally, catalyzes the reversible adenylation of nicotinate mononucleotide (NaMN) to nicotinic acid adenine dinucleotide (NaAD). The chain is Probable nicotinate-nucleotide adenylyltransferase from Pseudothermotoga lettingae (strain ATCC BAA-301 / DSM 14385 / NBRC 107922 / TMO) (Thermotoga lettingae).